Consider the following 593-residue polypeptide: Scarecrow-like protein 1 (593 aa).

Disordered stretches follow at residues 29–61 (NPKLYTLNENGNNNGVSSAQIFDPDRSKNPCLT) and 188–216 (YQNESEQHQDSPKESSSADSNSHVSSKEV). Over residues 35–48 (LNENGNNNGVSSAQ) the composition is skewed to polar residues. Residues 202 to 211 (SSSADSNSHV) are compositionally biased toward low complexity. Positions 213–593 (SKEVVSQATP…KSLIVASAWR (381 aa)) constitute a GRAS domain. The segment at 220 to 280 (ATPKQILISC…AARMAASGKF (61 aa)) is leucine repeat I (LRI). The tract at residues 299–364 (MQVLFEVCPC…GKRPRLRLTG (66 aa)) is VHIID. Residues 330–334 (VHIID) carry the VHIID motif. The interval 380 to 411 (IIGLRLEQLAEDNGVSFKFKAMPSKTSIVSPS) is leucine repeat II (LRII). Positions 421-515 (LIVNFAFQLH…RQCLARDIVN (95 aa)) are PFYRE. Residues 518–593 (ACEGEERIER…KSLIVASAWR (76 aa)) are SAW.

This sequence belongs to the GRAS family. In terms of tissue distribution, expressed in seedlings, roots, shoots, leaves, flowers and siliques.

Its subcellular location is the nucleus. Functionally, probable transcription factor involved in plant development. The chain is Scarecrow-like protein 1 (SCL1) from Arabidopsis thaliana (Mouse-ear cress).